Reading from the N-terminus, the 72-residue chain is High-potential iron-sulfur protein isozyme 1 (72 aa).

Residues Cys34, Cys37, Cys51, and Cys65 each coordinate [4Fe-4S] cluster.

It belongs to the high-potential iron-sulfur protein (HiPIP) family. As to quaternary structure, homodimer.

Its function is as follows. Specific class of high-redox-potential 4Fe-4S ferredoxins. Functions in anaerobic electron transport in most purple and in some other photosynthetic bacteria and in at least one genus (Paracoccus) of halophilic, denitrifying bacteria. The protein is High-potential iron-sulfur protein isozyme 1 (hip1) of Ectothiorhodospira shaposhnikovii (Ectothiorhodospira vacuolata).